Reading from the N-terminus, the 344-residue chain is Protein YRO2 (344 aa).

The Extracellular segment spans residues 1–34 (MSDYVELLKRGGNEAIKINPPTGADFHITSRGSD). Residues 35–55 (WLFTVFCVNLLFGVILVPLMF) traverse the membrane as a helical segment. At 56–62 (RKPVKDR) the chain is on the cytoplasmic side. The chain crosses the membrane as a helical span at residues 63–83 (FVYYTAIAPNLFMSIAYFTMA). Topologically, residues 84–119 (SNLGWIPVRAKYNHVQTSTQKEHPGYRQIFYARYVG) are extracellular. Residues 120 to 140 (WFLAFPWPIIQMSLLGGTPLW) form a helical membrane-spanning segment. Q141 is a topological domain (cytoplasmic). Residues 142–162 (IAFNVGMTEIFTVCWLIAACV) traverse the membrane as a helical segment. The Extracellular portion of the chain corresponds to 163 to 172 (HSTYKWGYYT). A helical membrane pass occupies residues 173–193 (IGIGAAIVVCISLMTTTFNLV). Over 194–202 (KARGKDVSN) the chain is Cytoplasmic. The chain crosses the membrane as a helical span at residues 203–223 (VFITFMSVIMFLWLIAYPTCF). Residues 224–238 (GITDGGNVLQPDSAT) lie on the Extracellular side of the membrane. The chain crosses the membrane as a helical span at residues 239–259 (IFYGIIDLLILSILPVLFMPL). Residues 260–344 (ANYLGIERLG…EEEDVATDSE (85 aa)) lie on the Cytoplasmic side of the membrane. Residues 282–344 (PVAEKKMPSP…EEEDVATDSE (63 aa)) form a disordered region. A Glycyl lysine isopeptide (Lys-Gly) (interchain with G-Cter in ubiquitin) cross-link involves residue K286. S293 is subject to Phosphoserine. The segment covering 297–306 (SDSDSSIKEK) has biased composition (basic and acidic residues). The span at 307 to 330 (LKLKKKHKKDKKKAKKAKKAKKAK) shows a compositional bias: basic residues. A compositionally biased stretch (acidic residues) spans 334 to 344 (EEEEDVATDSE). T341 carries the phosphothreonine modification. Phosphoserine is present on S343.

The protein belongs to the archaeal/bacterial/fungal opsin family.

The protein localises to the membrane. In Saccharomyces cerevisiae (strain ATCC 204508 / S288c) (Baker's yeast), this protein is Protein YRO2 (YRO2).